Consider the following 174-residue polypeptide: 3-hydroxyanthranilate 3,4-dioxygenase (174 aa).

Arg-47 contributes to the O2 binding site. Residues His-51, Glu-57, and His-95 each coordinate Fe cation. Residue Glu-57 coordinates substrate. Substrate contacts are provided by Arg-99 and Glu-110. Fe cation-binding residues include Cys-125, Cys-128, Cys-162, and Cys-165.

It belongs to the 3-HAO family. Homodimer. Fe(2+) is required as a cofactor.

It carries out the reaction 3-hydroxyanthranilate + O2 = (2Z,4Z)-2-amino-3-carboxymuconate 6-semialdehyde. It participates in cofactor biosynthesis; NAD(+) biosynthesis; quinolinate from L-kynurenine: step 3/3. Functionally, catalyzes the oxidative ring opening of 3-hydroxyanthranilate to 2-amino-3-carboxymuconate semialdehyde, which spontaneously cyclizes to quinolinate. This Burkholderia lata (strain ATCC 17760 / DSM 23089 / LMG 22485 / NCIMB 9086 / R18194 / 383) protein is 3-hydroxyanthranilate 3,4-dioxygenase.